We begin with the raw amino-acid sequence, 509 residues long: Maturase K (509 aa).

It belongs to the intron maturase 2 family. MatK subfamily.

It is found in the plastid. It localises to the chloroplast. In terms of biological role, usually encoded in the trnK tRNA gene intron. Probably assists in splicing its own and other chloroplast group II introns. The protein is Maturase K of Eucommia ulmoides (Hardy rubber tree).